Here is a 596-residue protein sequence, read N- to C-terminus: Jacalin-related lectin 46 (596 aa).

Residues 1–20 (MTERSEALGKDGNRRWDDKS) are disordered. 4 Jacalin-type lectin domains span residues 2-143 (TERS…YFTR), 146-291 (PTRI…YFTP), 294-439 (PTKS…HFYP), and 446-592 (AEKL…HVLP).

The protein belongs to the jacalin lectin family.

The polypeptide is Jacalin-related lectin 46 (JAL46) (Arabidopsis thaliana (Mouse-ear cress)).